The primary structure comprises 860 residues: Leucine--tRNA ligase (860 aa).

A 'HIGH' region motif is present at residues 42-52 (PYPSGRLHMGH). The 'KMSKS' region signature appears at 619 to 623 (KMSKS). ATP is bound at residue Lys622.

The protein belongs to the class-I aminoacyl-tRNA synthetase family.

The protein localises to the cytoplasm. The catalysed reaction is tRNA(Leu) + L-leucine + ATP = L-leucyl-tRNA(Leu) + AMP + diphosphate. The protein is Leucine--tRNA ligase of Escherichia coli O157:H7.